A 204-amino-acid chain; its full sequence is Factor arrest protein 3 (204 aa).

As to quaternary structure, component of a complex at least composed of FAR3, FAR7, FAR8, FAR10, FAR11 and VPS64.

Its subcellular location is the endoplasmic reticulum. Functionally, participates in the control of the reentry into the cell cycle following pheromone treatment. This Saccharomyces cerevisiae (strain ATCC 204508 / S288c) (Baker's yeast) protein is Factor arrest protein 3 (FAR3).